The chain runs to 150 residues: Globin-1 (150 aa).

A Globin domain is found at 11-150 (PLSDAEKNKI…MICILLSSAY (140 aa)). Positions 74 and 106 each coordinate heme b.

Belongs to the globin family. As to quaternary structure, monomer.

This is Globin-1 from Mordacia mordax (Southern hemisphere lamprey).